A 317-amino-acid chain; its full sequence is MTINDSAISEQGMCEEEQVARIAWFYYHDGLTQSEISDRLGLTRLKVSRLLEKGHQSGIIRVQINSRFEGCLEYETQLRRQFSLQHVRVIPGLADADVGGRLGIGAAHMLMSLLQPQQMLAIGFGEATMNTLQRLSGFISSQQIRLVTLSGGVGSYMTGIGQLNAACSVNIIPAPLRASSADIARTLKNENCVKDVLLAAQAADVAIVGIGAVSQQDDATIIRSGYISQGEQLMIGRKGAVGDILGYFFDAKGDVVTNIKIHNELIGLPLSALKTIPVRVGVAGGENKAEAIAAAMKGGYINALVTDQDTAAAILRS.

Positions 33-56 (QSEISDRLGLTRLKVSRLLEKGHQ) form a DNA-binding region, H-T-H motif.

This sequence belongs to the SorC transcriptional regulatory family.

The protein resides in the cytoplasm. Inactivated by phosphorylated autoinducer-2 (phospho-AI-2). Phospho-AI-2 acts by binding to LsrR, which is then unable to bind to the promoter regions, allowing the transcription of the target genes. In terms of biological role, transcriptional regulator that represses the expression of the lsr operon in the absence of the quorum-sensing signaling molecule autoinducer 2 (AI-2). It also represses the expression of the lsrRK operon. Acts by binding directly to the lsrA and lsrR promoter regions. In the presence of phosphorylated autoinducer-2 (phospho-AI-2), LsrR is inactivated, leading to the transcription of the genes. The polypeptide is Transcriptional regulator LsrR (lsrR) (Escherichia coli (strain K12 / DH10B)).